The sequence spans 299 residues: Tyrosine recombinase XerC (299 aa).

Residues 1–85 (MKRQLEAYCA…AVRGLYRYLN (85 aa)) form the Core-binding (CB) domain. The 180-residue stretch at 106 to 285 (RLPKVLDTDR…DFQHLAAVYD (180 aa)) folds into the Tyr recombinase domain. Active-site residues include arginine 146, lysine 170, histidine 237, arginine 240, and histidine 263. Tyrosine 272 functions as the O-(3'-phospho-DNA)-tyrosine intermediate in the catalytic mechanism.

This sequence belongs to the 'phage' integrase family. XerC subfamily. As to quaternary structure, forms a cyclic heterotetrameric complex composed of two molecules of XerC and two molecules of XerD.

Its subcellular location is the cytoplasm. Its function is as follows. Site-specific tyrosine recombinase, which acts by catalyzing the cutting and rejoining of the recombining DNA molecules. The XerC-XerD complex is essential to convert dimers of the bacterial chromosome into monomers to permit their segregation at cell division. It also contributes to the segregational stability of plasmids. The polypeptide is Tyrosine recombinase XerC (Pseudomonas putida (strain ATCC 47054 / DSM 6125 / CFBP 8728 / NCIMB 11950 / KT2440)).